A 302-amino-acid polypeptide reads, in one-letter code: Plant UBX domain-containing protein 3 (302 aa).

2 disordered regions span residues 1–64 and 79–98; these read MSSK…PKHD and VEGP…TGRL. An SEP domain is found at 113-177; the sequence is PVIHNIIFWS…NLMRRDEKCP (65 aa). The region spanning 224 to 301 is the UBX domain; sequence ETLPSTSIQL…GLASSVVIQK (78 aa).

In terms of assembly, interacts with CDC48A.

The polypeptide is Plant UBX domain-containing protein 3 (Arabidopsis thaliana (Mouse-ear cress)).